We begin with the raw amino-acid sequence, 586 residues long: A-type ATP synthase subunit A (586 aa).

Gly-238 to Thr-245 is an ATP binding site.

The protein belongs to the ATPase alpha/beta chains family. In terms of assembly, has multiple subunits with at least A(3), B(3), C, D, E, F, H, I and proteolipid K(x).

The protein resides in the cell membrane. It catalyses the reaction ATP + H2O + 4 H(+)(in) = ADP + phosphate + 5 H(+)(out). Functionally, component of the A-type ATP synthase that produces ATP from ADP in the presence of a proton gradient across the membrane. The A chain is the catalytic subunit. The chain is A-type ATP synthase subunit A from Haloferax volcanii (strain ATCC 29605 / DSM 3757 / JCM 8879 / NBRC 14742 / NCIMB 2012 / VKM B-1768 / DS2) (Halobacterium volcanii).